The primary structure comprises 264 residues: S-adenosylmethionine decarboxylase proenzyme (264 aa).

Catalysis depends on serine 111, which acts as the Schiff-base intermediate with substrate; via pyruvic acid. Residue serine 111 is modified to Pyruvic acid (Ser); by autocatalysis. The Proton acceptor; for processing activity role is filled by histidine 116. Cysteine 139 serves as the catalytic Proton donor; for catalytic activity.

This sequence belongs to the prokaryotic AdoMetDC family. Type 2 subfamily. In terms of assembly, heterooctamer of four alpha and four beta chains arranged as a tetramer of alpha/beta heterodimers. The cofactor is pyruvate. Post-translationally, is synthesized initially as an inactive proenzyme. Formation of the active enzyme involves a self-maturation process in which the active site pyruvoyl group is generated from an internal serine residue via an autocatalytic post-translational modification. Two non-identical subunits are generated from the proenzyme in this reaction, and the pyruvate is formed at the N-terminus of the alpha chain, which is derived from the carboxyl end of the proenzyme. The post-translation cleavage follows an unusual pathway, termed non-hydrolytic serinolysis, in which the side chain hydroxyl group of the serine supplies its oxygen atom to form the C-terminus of the beta chain, while the remainder of the serine residue undergoes an oxidative deamination to produce ammonia and the pyruvoyl group blocking the N-terminus of the alpha chain.

The catalysed reaction is S-adenosyl-L-methionine + H(+) = S-adenosyl 3-(methylsulfanyl)propylamine + CO2. It functions in the pathway amine and polyamine biosynthesis; S-adenosylmethioninamine biosynthesis; S-adenosylmethioninamine from S-adenosyl-L-methionine: step 1/1. Catalyzes the decarboxylation of S-adenosylmethionine to S-adenosylmethioninamine (dcAdoMet), the propylamine donor required for the synthesis of the polyamines spermine and spermidine from the diamine putrescine. This Geobacillus kaustophilus (strain HTA426) protein is S-adenosylmethionine decarboxylase proenzyme.